The sequence spans 488 residues: Neisserial heparin binding antigen (488 aa).

An N-terminal signal peptide occupies residues 1–17 (MFKRSVIAMACIFALSA). Residue C18 is the site of N-palmitoyl cysteine attachment. C18 carries S-diacylglycerol cysteine lipidation. A disordered region spans residues 21 to 201 (GGGGSPDVKS…NPAPANGGSN (181 aa)). Residues 43–53 (SEKETEAKEDA) show a composition bias toward basic and acidic residues. A compositionally biased stretch (low complexity) spans 54–70 (PQAGSQGQGAPSAQGSQ). Composition is skewed to polar residues over residues 101-118 (DMPQNAAGTDSSTPNHTP) and 127-142 (MENQATDAGESSQPAN). Positions 160–183 (AGGQNAGNTAAQGANQAGNNQAAG) are enriched in low complexity. The Arg-rich motif signature appears at 296 to 306 (RFRRSARSRRS). The tract at residues 306–488 (SLPAEMPLIP…GVFAGKKEQD (183 aa)) is C1 fragment.

Belongs to the NHBA family. The C-terminal beta-barrel forms a monomer. Post-translationally, cleaved in vivo by the Neisserial phase-variable autotransporter/serine protease NalP to give 2 fragments. The N-terminus remains in the cell outer membrane while the 22 kDa C-terminus (beginning on Ser-293) is soluble; this soluble fragment is called C2. Cleaved in vitro by human lactoferrin (LTF, between Arg-305 and Ser-306), this fragment is called C1. Cleavage by NalP or lactoferrin does not alter killing of Neisseria by bactericidal antibodies in vitro. Recombinant and cell surface protein is cleaved by human saliva kallikrein (KLK1) between Ser-303 and Arg-304; in saliva kallikrein is more active on NHBA than lactoferrin. Human plasma kallikrein (KLKB1) cleaves in a similar manner to KLK1.

The protein resides in the cell outer membrane. It localises to the cell surface. It is found in the host mitochondrion. In terms of biological role, a major human immunogenic protein detected in patients recovering from meningitidis, where it induces bactericidal antibodies. Binds heparin and heparan sulfate proteoglycan in vitro via the Arg-rich motif. Heparin-binding to this protein protects bacteria against killing by bactericidal antibodies (serum killing). Binds to human cells via the Arg-rich region; binding may require the intact protein as protein fragments do not bind to human cells. Protein binding to human cells is abolished by treatment with heparinase III but not chondroitinase ABC. The bacteria binds a number of human extracellular sialyated and/or sulfated glycans via this protein, including chondroitin sulfate (KD=5.2 nM), heparin (KD=52 nM) and ganglioside GT3 (KD=210 nM). The recombinant protein binds DNA non-specifically. Functionally, plays a role in extracellular-DNA (eDNA) mediated biofilm formation. In strain MC58 eDNA stimulates biofilm formation. When NHBA is not processed by NalP there is an increase in positively charged, NHBA- and IgA-derived DNA-binding peptides on the cell surface, resulting in increased DNA-binding peptides and increased biofilm formation. [C2 fragment] Localizes to host mitochondria when applied to the apical side of human endothelial cell layers, where it induces production of reactive oxygen species which lead to increased permeability of host endothelial cells. The C1 fragment (which lacks the first 14 residues of C2) does not have this effect. It is not known if this occurs during Neisseria infections. This is Neisserial heparin binding antigen from Neisseria meningitidis serogroup B (strain ATCC BAA-335 / MC58).